Reading from the N-terminus, the 289-residue chain is Phosphatidylglycerol--prolipoprotein diacylglyceryl transferase (289 aa).

A run of 3 helical transmembrane segments spans residues 13-33 (LGPL…LLGW), 61-81 (FILW…VLFY), and 99-119 (GGMS…LFAM). Arginine 144 lines the a 1,2-diacyl-sn-glycero-3-phospho-(1'-sn-glycerol) pocket. The next 2 membrane-spanning stretches (helical) occupy residues 218–238 (GVVM…LENV) and 250–270 (LGLT…LWLI).

Belongs to the Lgt family.

It localises to the cell inner membrane. The enzyme catalyses L-cysteinyl-[prolipoprotein] + a 1,2-diacyl-sn-glycero-3-phospho-(1'-sn-glycerol) = an S-1,2-diacyl-sn-glyceryl-L-cysteinyl-[prolipoprotein] + sn-glycerol 1-phosphate + H(+). It functions in the pathway protein modification; lipoprotein biosynthesis (diacylglyceryl transfer). Catalyzes the transfer of the diacylglyceryl group from phosphatidylglycerol to the sulfhydryl group of the N-terminal cysteine of a prolipoprotein, the first step in the formation of mature lipoproteins. The protein is Phosphatidylglycerol--prolipoprotein diacylglyceryl transferase of Phenylobacterium zucineum (strain HLK1).